A 425-amino-acid chain; its full sequence is Dihydroorotase (425 aa).

Zn(2+) is bound by residues H58 and H60. Residues H60–R62 and N92 contribute to the substrate site. Residues D150, H177, and H230 each coordinate Zn(2+). N276 serves as a coordination point for substrate. D303 contributes to the Zn(2+) binding site. Residue D303 is part of the active site. Substrate is bound by residues H307 and F321–G322.

Belongs to the metallo-dependent hydrolases superfamily. DHOase family. Class I DHOase subfamily. The cofactor is Zn(2+).

The enzyme catalyses (S)-dihydroorotate + H2O = N-carbamoyl-L-aspartate + H(+). The protein operates within pyrimidine metabolism; UMP biosynthesis via de novo pathway; (S)-dihydroorotate from bicarbonate: step 3/3. Functionally, catalyzes the reversible cyclization of carbamoyl aspartate to dihydroorotate. The polypeptide is Dihydroorotase (Pediococcus pentosaceus (strain ATCC 25745 / CCUG 21536 / LMG 10740 / 183-1w)).